A 281-amino-acid chain; its full sequence is Bifunctional protein FolD (281 aa).

Residues 161-163 (GRS), serine 186, and isoleucine 227 each bind NADP(+).

The protein belongs to the tetrahydrofolate dehydrogenase/cyclohydrolase family. Homodimer.

The enzyme catalyses (6R)-5,10-methylene-5,6,7,8-tetrahydrofolate + NADP(+) = (6R)-5,10-methenyltetrahydrofolate + NADPH. It catalyses the reaction (6R)-5,10-methenyltetrahydrofolate + H2O = (6R)-10-formyltetrahydrofolate + H(+). It participates in one-carbon metabolism; tetrahydrofolate interconversion. Its function is as follows. Catalyzes the oxidation of 5,10-methylenetetrahydrofolate to 5,10-methenyltetrahydrofolate and then the hydrolysis of 5,10-methenyltetrahydrofolate to 10-formyltetrahydrofolate. This chain is Bifunctional protein FolD, found in Brachyspira hyodysenteriae (strain ATCC 49526 / WA1).